Consider the following 490-residue polypeptide: Betaine aldehyde dehydrogenase (490 aa).

Thr26 and Asp93 together coordinate K(+). Position 150-152 (150-152 (GAW)) interacts with NAD(+). Lys162 (charge relay system) is an active-site residue. 176-179 (KPSE) is an NAD(+) binding site. A K(+)-binding site is contributed by Val180. 230-233 (GVAT) is an NAD(+) binding site. Leu246 contacts K(+). The Proton acceptor role is filled by Glu252. Positions 254, 286, and 387 each coordinate NAD(+). Cys286 acts as the Nucleophile in catalysis. Cys286 is subject to Cysteine sulfenic acid (-SOH). Positions 457 and 460 each coordinate K(+). Glu464 (charge relay system) is an active-site residue.

It belongs to the aldehyde dehydrogenase family. In terms of assembly, dimer of dimers. K(+) is required as a cofactor.

The enzyme catalyses betaine aldehyde + NAD(+) + H2O = glycine betaine + NADH + 2 H(+). It functions in the pathway amine and polyamine biosynthesis; betaine biosynthesis via choline pathway; betaine from betaine aldehyde: step 1/1. In terms of biological role, involved in the biosynthesis of the osmoprotectant glycine betaine. Catalyzes the irreversible oxidation of betaine aldehyde to the corresponding acid. The sequence is that of Betaine aldehyde dehydrogenase from Stenotrophomonas maltophilia (strain R551-3).